Here is a 223-residue protein sequence, read N- to C-terminus: Ubiquitin carboxyl-terminal hydrolase isozyme L1 (223 aa).

Methionine 1 is subject to N-acetylmethionine. A UCH catalytic domain is found at 2 to 221; the sequence is QLKPMEINPE…VRFSAVALCK (220 aa). The interaction with ubiquitin stretch occupies residues 5–10; sequence PMEINP. Cysteine 90 serves as the catalytic Nucleophile. Serine 125 bears the Phosphoserine mark. The active-site Proton donor is histidine 161. The interval 211–216 is interaction with ubiquitin; sequence EVRFSA. Cysteine 220 carries S-farnesyl cysteine lipidation. The propeptide at 221-223 is removed in mature form; the sequence is KAA.

Belongs to the peptidase C12 family. In terms of assembly, monomer. Homodimer. Interacts with COPS5 and SNCA. In terms of processing, O-glycosylated.

Its subcellular location is the cytoplasm. The protein resides in the endoplasmic reticulum membrane. It carries out the reaction Thiol-dependent hydrolysis of ester, thioester, amide, peptide and isopeptide bonds formed by the C-terminal Gly of ubiquitin (a 76-residue protein attached to proteins as an intracellular targeting signal).. In terms of biological role, ubiquitin-protein hydrolase involved both in the processing of ubiquitin precursors and of ubiquitinated proteins. This enzyme is a thiol protease that recognizes and hydrolyzes a peptide bond at the C-terminal glycine of ubiquitin. Also binds to free monoubiquitin and may prevent its degradation in lysosomes. The homodimer may have ATP-independent ubiquitin ligase activity. This Sus scrofa (Pig) protein is Ubiquitin carboxyl-terminal hydrolase isozyme L1 (UCHL1).